The chain runs to 364 residues: Aminomethyltransferase (364 aa).

The protein belongs to the GcvT family. As to quaternary structure, the glycine cleavage system is composed of four proteins: P, T, L and H.

It catalyses the reaction N(6)-[(R)-S(8)-aminomethyldihydrolipoyl]-L-lysyl-[protein] + (6S)-5,6,7,8-tetrahydrofolate = N(6)-[(R)-dihydrolipoyl]-L-lysyl-[protein] + (6R)-5,10-methylene-5,6,7,8-tetrahydrofolate + NH4(+). The glycine cleavage system catalyzes the degradation of glycine. The protein is Aminomethyltransferase of Thermotoga petrophila (strain ATCC BAA-488 / DSM 13995 / JCM 10881 / RKU-1).